Consider the following 270-residue polypeptide: 3-methyl-2-oxobutanoate hydroxymethyltransferase (270 aa).

2 residues coordinate Mg(2+): Asp50 and Asp89. 3-methyl-2-oxobutanoate is bound by residues 50–51 (DS), Asp89, and Lys118. Glu120 serves as a coordination point for Mg(2+). Glu187 functions as the Proton acceptor in the catalytic mechanism.

This sequence belongs to the PanB family. In terms of assembly, homodecamer; pentamer of dimers. Requires Mg(2+) as cofactor.

It is found in the cytoplasm. It catalyses the reaction 3-methyl-2-oxobutanoate + (6R)-5,10-methylene-5,6,7,8-tetrahydrofolate + H2O = 2-dehydropantoate + (6S)-5,6,7,8-tetrahydrofolate. It functions in the pathway cofactor biosynthesis; (R)-pantothenate biosynthesis; (R)-pantoate from 3-methyl-2-oxobutanoate: step 1/2. Catalyzes the reversible reaction in which hydroxymethyl group from 5,10-methylenetetrahydrofolate is transferred onto alpha-ketoisovalerate to form ketopantoate. This Helicobacter pylori (strain P12) protein is 3-methyl-2-oxobutanoate hydroxymethyltransferase.